The primary structure comprises 220 residues: Claudin-22 (220 aa).

Over 1–10 the chain is Cytoplasmic; it reads MALVFRTVAQ. Residues 11-30 form a helical membrane-spanning segment; the sequence is LAGVSLSLLGWVLSCLTNYL. The Extracellular segment spans residues 31 to 81; it reads PHWKNLNLDLNEMENWTMGLWQTCVIQEEVGMQCKDFDSFLALPAELRVSR. The chain crosses the membrane as a helical span at residues 82–102; the sequence is ILMFLSNGLGFLGLLVSGFGL. The Cytoplasmic segment spans residues 103-117; that stretch reads DCLRIGESQRDLKRR. A helical membrane pass occupies residues 118–138; it reads LLILGGILSWASGVTALVPVS. Residues 139–164 are Extracellular-facing; that stretch reads WVAHKTVQEFWDENVPDFVPRWEFGE. The helical transmembrane segment at 165–185 threads the bilayer; sequence ALFLGWFAGLSLLLGGCLLHC. Residues 186–220 lie on the Cytoplasmic side of the membrane; the sequence is AACSSHAPLASGHYAVAQTQDHHQELETRNTNLKH.

Belongs to the claudin family.

The protein resides in the cell junction. The protein localises to the tight junction. Its subcellular location is the cell membrane. Its function is as follows. Plays a major role in tight junction-specific obliteration of the intercellular space, through calcium-independent cell-adhesion activity. The chain is Claudin-22 (CLDN22) from Homo sapiens (Human).